The sequence spans 421 residues: 3-alpha-mycarosylerythronolide B desosaminyl transferase (421 aa).

Positions 1–23 (MRVVFSSMASKSHLFGLVPLAWA) are cleaved as a signal peptide.

Belongs to the glycosyltransferase 28 family. In terms of assembly, heterotetramer composed of EryCII and EryCIII.

The catalysed reaction is 3-O-alpha-L-mycarosylerythronolide B + dTDP-alpha-D-desosamine = erythromycin D + dTDP + H(+). It participates in antibiotic biosynthesis; erythromycin biosynthesis. Catalyzes the conversion of alpha-L-mycarosylerythronolide B into erythromycin D in the erythromycin biosynthesis pathway. This is 3-alpha-mycarosylerythronolide B desosaminyl transferase (eryCIII) from Saccharopolyspora erythraea (strain ATCC 11635 / DSM 40517 / JCM 4748 / NBRC 13426 / NCIMB 8594 / NRRL 2338).